Here is a 901-residue protein sequence, read N- to C-terminus: Viral-enhancing factor (901 aa).

A Peptidase M60 domain is found at 27–330 (HRRTEVGVVL…IFTWLYNPQR (304 aa)). Asn65, Asn265, Asn339, Asn349, Asn540, Asn594, Asn595, Asn642, Asn683, and Asn698 each carry an N-linked (GlcNAc...) asparagine; by host glycan.

Functionally, involved in disruption of the peritrophic membrane and fusion of nucleocapsids with midgut cells. The chain is Viral-enhancing factor (VEF) from Trichoplusia ni (Cabbage looper).